A 327-amino-acid polypeptide reads, in one-letter code: Putative hydroxymethylpyrimidine/phosphomethylpyrimidine kinase C18B5.05c (327 aa).

Position 54 (Gln54) interacts with 4-amino-5-hydroxymethyl-2-methylpyrimidine.

It belongs to the ThiD family.

It localises to the cytoplasm. The protein localises to the nucleus. The catalysed reaction is 4-amino-5-hydroxymethyl-2-methylpyrimidine + ATP = 4-amino-2-methyl-5-(phosphooxymethyl)pyrimidine + ADP + H(+). It catalyses the reaction 4-amino-2-methyl-5-(phosphooxymethyl)pyrimidine + ATP = 4-amino-2-methyl-5-(diphosphooxymethyl)pyrimidine + ADP. The protein operates within cofactor biosynthesis; thiamine diphosphate biosynthesis; 4-amino-2-methyl-5-diphosphomethylpyrimidine from 5-amino-1-(5-phospho-D-ribosyl)imidazole: step 2/3. It functions in the pathway cofactor biosynthesis; thiamine diphosphate biosynthesis; 4-amino-2-methyl-5-diphosphomethylpyrimidine from 5-amino-1-(5-phospho-D-ribosyl)imidazole: step 3/3. In terms of biological role, catalyzes the phosphorylation of hydroxymethylpyrimidine phosphate (HMP-P) to HMP-PP, and of HMP to HMP-P. This is Putative hydroxymethylpyrimidine/phosphomethylpyrimidine kinase C18B5.05c from Schizosaccharomyces pombe (strain 972 / ATCC 24843) (Fission yeast).